Consider the following 328-residue polypeptide: Malate dehydrogenase (328 aa).

11–17 (GAAGQIG) provides a ligand contact to NAD(+). 2 residues coordinate substrate: arginine 94 and arginine 100. Residues asparagine 107, glutamine 114, and 131–133 (VGN) contribute to the NAD(+) site. Residues asparagine 133 and arginine 164 each contribute to the substrate site. The active-site Proton acceptor is the histidine 189.

The protein belongs to the LDH/MDH superfamily. MDH type 2 family.

The enzyme catalyses (S)-malate + NAD(+) = oxaloacetate + NADH + H(+). Its function is as follows. Catalyzes the reversible oxidation of malate to oxaloacetate. The sequence is that of Malate dehydrogenase from Xylella fastidiosa (strain 9a5c).